Reading from the N-terminus, the 102-residue chain is uncharacterized protein (102 aa).

3 residues coordinate [3Fe-4S] cluster: Cys-10, Cys-16, and Cys-55. The tract at residues 66-102 (DAGDDERASADPARSPAEAERHAAKDQRIPGGHDGTV) is disordered. The span at 82–93 (AEAERHAAKDQR) shows a compositional bias: basic and acidic residues.

The cofactor is [3Fe-4S] cluster.

Electron transport protein for the cytochrome systems. This is an uncharacterized protein from Sinorhizobium fredii (strain NBRC 101917 / NGR234).